Here is a 526-residue protein sequence, read N- to C-terminus: G-protein coupled receptor 161 (526 aa).

Over 1–27 (MNGSKNGTAVANSTNGLDDNGLMVLES) the chain is Extracellular. 3 N-linked (GlcNAc...) asparagine glycosylation sites follow: N2, N6, and N12. The chain crosses the membrane as a helical span at residues 28–48 (VSIIIIAILACLGNLVIVVTL). Topologically, residues 49-60 (YKKPYLLTPSNK) are cytoplasmic. A helical membrane pass occupies residues 61–81 (FVFSLTSSNLLLSVLMLPFVV). Over 82–98 (ASSVRRDWMFGVVWCNF) the chain is Extracellular. The cysteines at positions 96 and 174 are disulfide-linked. An N-linked (GlcNAc...) asparagine glycan is attached at N97. Residues 99–119 (TALLHLLVSSSSMLTLGAIAI) form a helical membrane-spanning segment. Residues 120–139 (DRYYAVLYPMIYPMKITGNR) are Cytoplasmic-facing. A helical transmembrane segment spans residues 140 to 160 (AVLAIVYIWLHSLVGCLPPLF). Topologically, residues 161 to 186 (GWSSFEFDRFKWTCTVSWHKEISYTA) are extracellular. The chain crosses the membrane as a helical span at residues 187–207 (FWVTWCCLLPLVAMLVCYGVI). The Cytoplasmic segment spans residues 208 to 263 (FRVARIKARKVYCGSVVVSQEESSSQNNGRKNSNTSTSSSGSRKSLIYSGSQCKAF). Positions 231–250 (SSQNNGRKNSNTSTSSSGSR) are disordered. A helical transmembrane segment spans residues 264 to 284 (ITILVVLGTFLTTWGPYVVVI). Over 285–300 (STEALLGKNSVSPQVE) the chain is Extracellular. The chain crosses the membrane as a helical span at residues 301–321 (TLVSWLSFTSAVCHPLIYGLW). The Cytoplasmic segment spans residues 322–526 (NKTVRKELLG…EEEMEREEKM (205 aa)). A disordered region spans residues 505-526 (IDEGIVKDDDDDEEEMEREEKM). The span at 512–526 (DDDDDEEEMEREEKM) shows a compositional bias: acidic residues.

It belongs to the G-protein coupled receptor 1 family.

The protein localises to the cell projection. Its subcellular location is the cilium membrane. It localises to the cell membrane. In terms of biological role, key negative regulator of Shh signaling during neural tube development. Recruited to primary cilia and acts as a regulator of the PKA-dependent basal repression machinery in Shh signaling by increasing cAMP levels, leading to promote the PKA-dependent processing of gli3 into gli3r and repress the Shh signaling. In presence of shh, it is removed from primary cilia, preventing its activity and allowing activation of the Shh signaling. Required in left/right patterning by modulating Ca(2+) levels in the cells surrounding the Kupffer vesicle. The sequence is that of G-protein coupled receptor 161 (gpr161) from Danio rerio (Zebrafish).